Consider the following 362-residue polypeptide: Phosphoserine aminotransferase (362 aa).

An L-glutamate-binding site is contributed by arginine 43. Pyridoxal 5'-phosphate contacts are provided by residues 77–78 (AR), tryptophan 103, threonine 153, aspartate 173, and glutamine 196. Lysine 197 is modified (N6-(pyridoxal phosphate)lysine).

The protein belongs to the class-V pyridoxal-phosphate-dependent aminotransferase family. SerC subfamily. As to quaternary structure, homodimer. Pyridoxal 5'-phosphate serves as cofactor.

The protein resides in the cytoplasm. It catalyses the reaction O-phospho-L-serine + 2-oxoglutarate = 3-phosphooxypyruvate + L-glutamate. It carries out the reaction 4-(phosphooxy)-L-threonine + 2-oxoglutarate = (R)-3-hydroxy-2-oxo-4-phosphooxybutanoate + L-glutamate. The protein operates within amino-acid biosynthesis; L-serine biosynthesis; L-serine from 3-phospho-D-glycerate: step 2/3. Its pathway is cofactor biosynthesis; pyridoxine 5'-phosphate biosynthesis; pyridoxine 5'-phosphate from D-erythrose 4-phosphate: step 3/5. Its function is as follows. Catalyzes the reversible conversion of 3-phosphohydroxypyruvate to phosphoserine and of 3-hydroxy-2-oxo-4-phosphonooxybutanoate to phosphohydroxythreonine. In Legionella pneumophila (strain Paris), this protein is Phosphoserine aminotransferase.